Here is a 344-residue protein sequence, read N- to C-terminus: Phosphoserine phosphatase (344 aa).

The ACT domain maps to 48–120 (VVTILGKDRV…ERLGLDIVMQ (73 aa)). The active-site Nucleophile is Asp-135. Mg(2+)-binding residues include Asp-135 and Asp-137. The Proton donor role is filled by Asp-137. Substrate-binding positions include Glu-144, Arg-180, 223-224 (SG), and Lys-268. Asp-291 is a binding site for Mg(2+).

The protein belongs to the HAD-like hydrolase superfamily. SerB family. Mg(2+) is required as a cofactor.

The enzyme catalyses O-phospho-L-serine + H2O = L-serine + phosphate. The catalysed reaction is O-phospho-D-serine + H2O = D-serine + phosphate. Its pathway is amino-acid biosynthesis; L-serine biosynthesis; L-serine from 3-phospho-D-glycerate: step 3/3. This chain is Phosphoserine phosphatase, found in Archaeoglobus fulgidus (strain ATCC 49558 / DSM 4304 / JCM 9628 / NBRC 100126 / VC-16).